Here is a 111-residue protein sequence, read N- to C-terminus: Large ribosomal subunit protein uL22 (111 aa).

Belongs to the universal ribosomal protein uL22 family. In terms of assembly, part of the 50S ribosomal subunit.

This protein binds specifically to 23S rRNA; its binding is stimulated by other ribosomal proteins, e.g. L4, L17, and L20. It is important during the early stages of 50S assembly. It makes multiple contacts with different domains of the 23S rRNA in the assembled 50S subunit and ribosome. Functionally, the globular domain of the protein is located near the polypeptide exit tunnel on the outside of the subunit, while an extended beta-hairpin is found that lines the wall of the exit tunnel in the center of the 70S ribosome. The chain is Large ribosomal subunit protein uL22 from Francisella tularensis subsp. tularensis (strain FSC 198).